Reading from the N-terminus, the 196-residue chain is dTTP/UTP pyrophosphatase (196 aa).

Residue D72 is the Proton acceptor of the active site.

The protein belongs to the Maf family. YhdE subfamily. It depends on a divalent metal cation as a cofactor.

It localises to the cytoplasm. It carries out the reaction dTTP + H2O = dTMP + diphosphate + H(+). It catalyses the reaction UTP + H2O = UMP + diphosphate + H(+). Functionally, nucleoside triphosphate pyrophosphatase that hydrolyzes dTTP and UTP. May have a dual role in cell division arrest and in preventing the incorporation of modified nucleotides into cellular nucleic acids. The sequence is that of dTTP/UTP pyrophosphatase from Chlamydia trachomatis serovar L2 (strain ATCC VR-902B / DSM 19102 / 434/Bu).